We begin with the raw amino-acid sequence, 109 residues long: uncharacterized protein (109 aa).

The helical transmembrane segment at Leu-75–Tyr-95 threads the bilayer.

It is found in the membrane. This is an uncharacterized protein from Schizosaccharomyces pombe (strain 972 / ATCC 24843) (Fission yeast).